Reading from the N-terminus, the 343-residue chain is Cathepsin Q (343 aa).

Residues 1-20 (MTPAVFLVILCLGVVPGASA) form the signal peptide. A propeptide spans 21–124 (LDLSLDVQWQ…FPNSWNWRDA (104 aa)) (activation peptide). Cystine bridges form between C146-C189 and C180-C222. C149 is a catalytic residue. N228 carries N-linked (GlcNAc...) asparagine glycosylation. The cysteines at positions 280 and 332 are disulfide-linked. Residue H286 is part of the active site. The N-linked (GlcNAc...) asparagine glycan is linked to N298. N310 is a catalytic residue.

Belongs to the peptidase C1 family. Highly expressed in placenta.

The protein resides in the lysosome. This is Cathepsin Q (Ctsq) from Rattus norvegicus (Rat).